Here is a 214-residue protein sequence, read N- to C-terminus: GTP-binding nuclear protein Ran (214 aa).

The 165-residue stretch at 6-170 folds into the Small GTPase Ran-type domain; it reads YIPQYKLILV…LWLARRLSNQ (165 aa). A GTP-binding site is contributed by 17–24; sequence DGGVGKTT. Residues 36 to 44 are switch-I; it reads KKYIPTLGV. Residues G67, 121 to 124, and 149 to 151 each bind GTP; these read NKVD and SAR. Positions 67-83 are switch-II; that stretch reads GQEKFGGLRDGYYIKSD.

It belongs to the small GTPase superfamily. Ran family. As to quaternary structure, found in a nuclear export complex with RanGTP, exportin and pre-miRNA.

The protein localises to the nucleus. In terms of biological role, GTP-binding protein involved in nucleocytoplasmic transport. Required for the import of protein into the nucleus and also for RNA export. Involved in chromatin condensation and control of cell cycle. The polypeptide is GTP-binding nuclear protein Ran (Plasmodium falciparum).